The chain runs to 202 residues: MADS-box transcription factor 33 (202 aa).

The region spanning 1–61 is the MADS-box domain; sequence MVRGKVQMRR…GKLHELATNG (61 aa). In terms of domain architecture, K-box spans 87-177; sequence QQVAEQGIFL…QEKVKEQQKL (91 aa).

Expressed in seedling roots.

The protein resides in the nucleus. Functionally, probable transcription factor. This Oryza sativa subsp. japonica (Rice) protein is MADS-box transcription factor 33 (MADS33).